Consider the following 202-residue polypeptide: N-(5'-phosphoribosyl)anthranilate isomerase (202 aa).

The protein belongs to the TrpF family.

It carries out the reaction N-(5-phospho-beta-D-ribosyl)anthranilate = 1-(2-carboxyphenylamino)-1-deoxy-D-ribulose 5-phosphate. It functions in the pathway amino-acid biosynthesis; L-tryptophan biosynthesis; L-tryptophan from chorismate: step 3/5. This Listeria monocytogenes serotype 4b (strain CLIP80459) protein is N-(5'-phosphoribosyl)anthranilate isomerase.